Here is a 775-residue protein sequence, read N- to C-terminus: Chloride channel protein CLC-a (775 aa).

Positions Met1–Leu28 are disordered. 12 helical membrane-spanning segments follow: residues Thr88 to Val108, Gly131 to Val151, Phe178 to Leu198, Leu206 to Arg226, Gly248 to Leu268, Ala278 to Ile298, Ala328 to Tyr348, Val371 to Leu391, Met453 to Ile473, Gly478 to Met498, Ala510 to Val530, and Ile531 to Ile551. CBS domains are found at residues Ala595–Glu658 and Thr703–Lys768. The helical transmembrane segment at His730–Thr750 threads the bilayer.

The protein belongs to the chloride channel (TC 2.A.49) family. In terms of assembly, homodimer. Interacts with PP2A5. As to expression, broadly expressed in the plant.

The protein resides in the membrane. Functionally, voltage-gated chloride channel that could play a role in the regulation of nitrate content. The sequence is that of Chloride channel protein CLC-a (CLC-A) from Arabidopsis thaliana (Mouse-ear cress).